A 188-amino-acid chain; its full sequence is Elongation factor P (188 aa).

The protein belongs to the elongation factor P family.

Its subcellular location is the cytoplasm. It participates in protein biosynthesis; polypeptide chain elongation. Involved in peptide bond synthesis. Stimulates efficient translation and peptide-bond synthesis on native or reconstituted 70S ribosomes in vitro. Probably functions indirectly by altering the affinity of the ribosome for aminoacyl-tRNA, thus increasing their reactivity as acceptors for peptidyl transferase. In Gluconobacter oxydans (strain 621H) (Gluconobacter suboxydans), this protein is Elongation factor P.